The primary structure comprises 77 residues: MKEQKWIHEGLITESLPNGMFRVRLDNEDLILGYVSGKIRRSFIRILPGDKVKIEVSRYDSTRGRIIYRLRNKDSKD.

The S1-like domain occupies 1–71 (MKEQKWIHEG…TRGRIIYRLR (71 aa)).

The protein belongs to the IF-1 family. As to quaternary structure, component of the 30S ribosomal translation pre-initiation complex which assembles on the 30S ribosome in the order IF-2 and IF-3, IF-1 and N-formylmethionyl-tRNA(fMet); mRNA recruitment can occur at any time during PIC assembly.

The protein localises to the plastid. It localises to the chloroplast. One of the essential components for the initiation of protein synthesis. Stabilizes the binding of IF-2 and IF-3 on the 30S subunit to which N-formylmethionyl-tRNA(fMet) subsequently binds. Helps modulate mRNA selection, yielding the 30S pre-initiation complex (PIC). Upon addition of the 50S ribosomal subunit IF-1, IF-2 and IF-3 are released leaving the mature 70S translation initiation complex. The polypeptide is Translation initiation factor IF-1, chloroplastic (Antirrhinum majus (Garden snapdragon)).